We begin with the raw amino-acid sequence, 661 residues long: Pumilio domain-containing protein C56F2.08c (661 aa).

One can recognise an RRM domain in the interval 1-74 (MLYVSNLPVG…GPVQVMLAKP (74 aa)). Ser102 bears the Phosphoserine mark. Position 104 is a phosphothreonine (Thr104). A Phosphoserine modification is found at Ser105. The 354-residue stretch at 129–482 (INLDIVDSMI…RLMEEVGMTS (354 aa)) folds into the PUM-HD domain. Pumilio repeat units lie at residues 191–226 (SMLD…AMLE), 227–263 (RIAP…LIVK), 264–302 (HLRP…VMAR), and 374–410 (HLAT…LLLK). Phosphoserine is present on residues Ser482, Ser486, Ser488, and Ser490.

The protein resides in the cytoplasm. The chain is Pumilio domain-containing protein C56F2.08c from Schizosaccharomyces pombe (strain 972 / ATCC 24843) (Fission yeast).